Reading from the N-terminus, the 272-residue chain is Enoyl-[acyl-carrier-protein] reductase [NADH] 1 (272 aa).

Residues glycine 17, 23–24, glutamine 44, 68–69, and isoleucine 96 each bind NAD(+); these read SI and DV. Active-site proton acceptor residues include tyrosine 149 and tyrosine 159. NAD(+) contacts are provided by residues lysine 166 and 195 to 199; that span reads IKTLA.

This sequence belongs to the short-chain dehydrogenases/reductases (SDR) family. FabI subfamily.

The protein localises to the cell inner membrane. It carries out the reaction a 2,3-saturated acyl-[ACP] + NAD(+) = a (2E)-enoyl-[ACP] + NADH + H(+). It functions in the pathway lipid metabolism; fatty acid biosynthesis. This chain is Enoyl-[acyl-carrier-protein] reductase [NADH] 1 (fabI1), found in Rhizobium meliloti (strain 1021) (Ensifer meliloti).